The following is a 114-amino-acid chain: Flagellar transcriptional regulator FlhD (114 aa).

The protein belongs to the FlhD family. In terms of assembly, homodimer; disulfide-linked. Forms a heterohexamer composed of two FlhC and four FlhD subunits. Each FlhC binds a FlhD dimer, forming a heterotrimer, and a hexamer assembles by dimerization of two heterotrimers.

It is found in the cytoplasm. Functions in complex with FlhC as a master transcriptional regulator that regulates transcription of several flagellar and non-flagellar operons by binding to their promoter region. Activates expression of class 2 flagellar genes, including fliA, which is a flagellum-specific sigma factor that turns on the class 3 genes. Also regulates genes whose products function in a variety of physiological pathways. The polypeptide is Flagellar transcriptional regulator FlhD (Wigglesworthia glossinidia brevipalpis).